Consider the following 173-residue polypeptide: Shikimate kinase 2 (173 aa).

12-17 lines the ATP pocket; that stretch reads GCGKTT. 2 residues coordinate Mg(2+): Thr-16 and Asp-32. Substrate-binding residues include Asp-34, Arg-58, and Gly-79. Positions 112–126 are LID domain; that stretch reads EENPQDNQRPTLTGR. Arg-120 serves as a coordination point for ATP. Arg-139 contributes to the substrate binding site. Residue Gln-155 coordinates ATP.

Belongs to the shikimate kinase family. AroL subfamily. In terms of assembly, monomer. The cofactor is Mg(2+).

It is found in the cytoplasm. It catalyses the reaction shikimate + ATP = 3-phosphoshikimate + ADP + H(+). The protein operates within metabolic intermediate biosynthesis; chorismate biosynthesis; chorismate from D-erythrose 4-phosphate and phosphoenolpyruvate: step 5/7. Catalyzes the specific phosphorylation of the 3-hydroxyl group of shikimic acid using ATP as a cosubstrate. The sequence is that of Shikimate kinase 2 from Pectobacterium carotovorum subsp. carotovorum (strain PC1).